The sequence spans 320 residues: D-amino-acid oxidase (320 aa).

FAD contacts are provided by Ala-13, Gly-14, Val-15, Thr-42, Thr-43, Ser-44, Gly-48, and Ala-49. Tyr-220 and Arg-274 together coordinate D-proline. D-serine contacts are provided by Tyr-220 and Arg-274. Residues Arg-274, Gly-299, Gly-300, Gly-302, and Thr-304 each contribute to the FAD site. D-proline is bound at residue Gly-300. Residue Gly-300 coordinates D-serine.

This sequence belongs to the DAMOX/DASOX family. Requires FAD as cofactor.

The protein localises to the cytoplasm. The protein resides in the secreted. It is found in the cell wall. It catalyses the reaction a D-alpha-amino acid + O2 + H2O = a 2-oxocarboxylate + H2O2 + NH4(+). Functionally, catalyzes the oxidative deamination of D-amino acids with broad substrate specificity. Enables the organism to utilize D-amino acids as a source of nutrients. Enables the organism to utilize glycine as a carbon source. This Mycobacterium tuberculosis (strain ATCC 25177 / H37Ra) protein is D-amino-acid oxidase.